Here is a 225-residue protein sequence, read N- to C-terminus: Cobalt transport protein CbiM (225 aa).

The next 6 helical transmembrane spans lie at 7 to 27, 43 to 63, 76 to 96, 108 to 128, 143 to 163, and 175 to 195; these read VLPLGWCAFWNALALPFVAIA, PFVGLIAAAVFAISCMPVPVP, LAAVLIGPWMTVLVTVVALLI, TLGADVASMGIAGAFTGYFAF, FLAGVTSDWATYATTALALAL, and FTGVALAFVPTQLPLGLLEGV.

This sequence belongs to the CbiM family. Forms an energy-coupling factor (ECF) transporter complex composed of an ATP-binding protein (A component, CbiO), a transmembrane protein (T component, CbiQ) and 2 possible substrate-capture proteins (S components, CbiM and CbiN) of unknown stoichimetry.

The protein localises to the cell inner membrane. The protein operates within cofactor biosynthesis; adenosylcobalamin biosynthesis. Functionally, part of the energy-coupling factor (ECF) transporter complex CbiMNOQ involved in cobalt import. The protein is Cobalt transport protein CbiM of Sorangium cellulosum (strain So ce56) (Polyangium cellulosum (strain So ce56)).